The following is a 181-amino-acid chain: Large ribosomal subunit protein uL5 (181 aa).

This sequence belongs to the universal ribosomal protein uL5 family. Part of the 50S ribosomal subunit; part of the 5S rRNA/L5/L18/L25 subcomplex. Contacts the 5S rRNA and the P site tRNA. Forms a bridge to the 30S subunit in the 70S ribosome.

In terms of biological role, this is one of the proteins that bind and probably mediate the attachment of the 5S RNA into the large ribosomal subunit, where it forms part of the central protuberance. In the 70S ribosome it contacts protein S13 of the 30S subunit (bridge B1b), connecting the 2 subunits; this bridge is implicated in subunit movement. Contacts the P site tRNA; the 5S rRNA and some of its associated proteins might help stabilize positioning of ribosome-bound tRNAs. The sequence is that of Large ribosomal subunit protein uL5 from Colwellia psychrerythraea (strain 34H / ATCC BAA-681) (Vibrio psychroerythus).